We begin with the raw amino-acid sequence, 177 residues long: MSEFVTVARPYAKAAFDFAVEHQSLDRWQDMLAFAAEVAKNEQMAELLSGALAPETLAESFIAICGDQLDANGQNLIRVMAENGRLKVLPDVLEQFIQLRAALEATVEVEVTSASALSDEQLAKISAAMEKRLSRKVKLNCKIDKSVMAGVIIRSGDTVIDGSVRGRLERLADVLQS.

Belongs to the ATPase delta chain family. In terms of assembly, F-type ATPases have 2 components, F(1) - the catalytic core - and F(0) - the membrane proton channel. F(1) has five subunits: alpha(3), beta(3), gamma(1), delta(1), epsilon(1). F(0) has three main subunits: a(1), b(2) and c(10-14). The alpha and beta chains form an alternating ring which encloses part of the gamma chain. F(1) is attached to F(0) by a central stalk formed by the gamma and epsilon chains, while a peripheral stalk is formed by the delta and b chains.

The protein resides in the cell inner membrane. Functionally, f(1)F(0) ATP synthase produces ATP from ADP in the presence of a proton or sodium gradient. F-type ATPases consist of two structural domains, F(1) containing the extramembraneous catalytic core and F(0) containing the membrane proton channel, linked together by a central stalk and a peripheral stalk. During catalysis, ATP synthesis in the catalytic domain of F(1) is coupled via a rotary mechanism of the central stalk subunits to proton translocation. In terms of biological role, this protein is part of the stalk that links CF(0) to CF(1). It either transmits conformational changes from CF(0) to CF(1) or is implicated in proton conduction. This Cronobacter sakazakii (strain ATCC BAA-894) (Enterobacter sakazakii) protein is ATP synthase subunit delta.